We begin with the raw amino-acid sequence, 512 residues long: Cytochrome P450 monooxygenase astB (512 aa).

A helical membrane pass occupies residues 5–25 (DLSFPAAIGAVFGAVAISVAA). Position 452 (cysteine 452) interacts with heme.

It belongs to the cytochrome P450 family. Heme serves as cofactor.

The protein localises to the membrane. It participates in secondary metabolite biosynthesis; terpenoid biosynthesis. Functionally, cytochrome P450 monooxygenase; part of the gene cluster that mediates the biosynthesis of the sesquiterpenoid aspterric acid (AA), an inhibitor of dihydroxy-acid dehydratase (DHAD) effective as an herbicide. AstB catalyzes the second step within the pathway and converts (-)-daucane produced by the terpene cyclase astA into an alpha-epoxy carboxylate intermediate which is further converted into the tricyclic aspterric acid by the cytochrome P450 monooxygenase astC. The protein is Cytochrome P450 monooxygenase astB of Aspergillus terreus (strain NIH 2624 / FGSC A1156).